A 514-amino-acid polypeptide reads, in one-letter code: Putative fucosyltransferase 10 (514 aa).

5 N-linked (GlcNAc...) asparagine glycosylation sites follow: Asn185, Asn210, Asn355, Asn377, and Asn456.

This sequence belongs to the glycosyltransferase 37 family. In terms of tissue distribution, expressed in root, leaves, stems and seedlings.

The protein resides in the golgi apparatus. It functions in the pathway protein modification; protein glycosylation. In terms of biological role, may be involved in cell wall biosynthesis. May act as a fucosyltransferase. The protein is Putative fucosyltransferase 10 (FUT10) of Arabidopsis thaliana (Mouse-ear cress).